The chain runs to 376 residues: Erythronate-4-phosphate dehydrogenase (376 aa).

The substrate site is built by Ser45 and Thr67. NAD(+) is bound at residue Asp147. Residue Arg209 is part of the active site. Asp233 lines the NAD(+) pocket. Glu238 is an active-site residue. The active-site Proton donor is His255. Gly258 provides a ligand contact to NAD(+). Tyr259 contributes to the substrate binding site.

It belongs to the D-isomer specific 2-hydroxyacid dehydrogenase family. PdxB subfamily. In terms of assembly, homodimer.

It localises to the cytoplasm. The enzyme catalyses 4-phospho-D-erythronate + NAD(+) = (R)-3-hydroxy-2-oxo-4-phosphooxybutanoate + NADH + H(+). Its pathway is cofactor biosynthesis; pyridoxine 5'-phosphate biosynthesis; pyridoxine 5'-phosphate from D-erythrose 4-phosphate: step 2/5. Functionally, catalyzes the oxidation of erythronate-4-phosphate to 3-hydroxy-2-oxo-4-phosphonooxybutanoate. The chain is Erythronate-4-phosphate dehydrogenase from Shewanella oneidensis (strain ATCC 700550 / JCM 31522 / CIP 106686 / LMG 19005 / NCIMB 14063 / MR-1).